Here is a 271-residue protein sequence, read N- to C-terminus: Serine O-acetyltransferase (271 aa).

Catalysis depends on C112, which acts as the Acyl-thioester intermediate. The active-site Proton acceptor is H204. E206 is a catalytic residue.

This sequence belongs to the MetA family.

It catalyses the reaction L-serine + acetyl-CoA = O-acetyl-L-serine + CoA. It functions in the pathway amino-acid biosynthesis; L-cysteine biosynthesis; L-cysteine from L-serine: step 1/2. In terms of biological role, catalyzes the formation of O-acetylserine (OAS) from L-serine and acetyl-CoA. To a lesser extent, is also able to use succinyl-CoA and propionyl-CoA as acyl donors, but not butyryl-CoA. Does not acylate D-serine and L-homoserine. In Lacticaseibacillus casei (Lactobacillus casei), this protein is Serine O-acetyltransferase.